We begin with the raw amino-acid sequence, 274 residues long: Diaminopimelate epimerase (274 aa).

3 residues coordinate substrate: N11, Q44, and N64. Residue C73 is the Proton donor of the active site. Residues 74 to 75 (GN), N157, N190, and 208 to 209 (ER) contribute to the substrate site. C217 (proton acceptor) is an active-site residue. 218–219 (GS) contributes to the substrate binding site.

This sequence belongs to the diaminopimelate epimerase family. In terms of assembly, homodimer.

Its subcellular location is the cytoplasm. It catalyses the reaction (2S,6S)-2,6-diaminopimelate = meso-2,6-diaminopimelate. It functions in the pathway amino-acid biosynthesis; L-lysine biosynthesis via DAP pathway; DL-2,6-diaminopimelate from LL-2,6-diaminopimelate: step 1/1. Catalyzes the stereoinversion of LL-2,6-diaminopimelate (L,L-DAP) to meso-diaminopimelate (meso-DAP), a precursor of L-lysine and an essential component of the bacterial peptidoglycan. This Haemophilus ducreyi (strain 35000HP / ATCC 700724) protein is Diaminopimelate epimerase.